The following is a 499-amino-acid chain: Probable cytosol aminopeptidase (499 aa).

2 residues coordinate Mn(2+): lysine 264 and aspartate 269. The active site involves lysine 276. 3 residues coordinate Mn(2+): aspartate 287, aspartate 346, and glutamate 348. Residue arginine 350 is part of the active site.

This sequence belongs to the peptidase M17 family. Mn(2+) serves as cofactor.

The protein localises to the cytoplasm. The enzyme catalyses Release of an N-terminal amino acid, Xaa-|-Yaa-, in which Xaa is preferably Leu, but may be other amino acids including Pro although not Arg or Lys, and Yaa may be Pro. Amino acid amides and methyl esters are also readily hydrolyzed, but rates on arylamides are exceedingly low.. It catalyses the reaction Release of an N-terminal amino acid, preferentially leucine, but not glutamic or aspartic acids.. Functionally, presumably involved in the processing and regular turnover of intracellular proteins. Catalyzes the removal of unsubstituted N-terminal amino acids from various peptides. This Rhodopseudomonas palustris (strain BisB18) protein is Probable cytosol aminopeptidase.